A 1036-amino-acid chain; its full sequence is uncharacterized protein (1036 aa).

Helical transmembrane passes span 4-24 (YLFIPLLVSFLFPVALANASL) and 1004-1024 (ILWVIFGIIISLMISSAVLFL).

Belongs to the MG414/MG415 family.

It is found in the cell membrane. This is an uncharacterized protein from Mycoplasma genitalium (strain ATCC 33530 / DSM 19775 / NCTC 10195 / G37) (Mycoplasmoides genitalium).